We begin with the raw amino-acid sequence, 411 residues long: Phospholipase ABHD3 (411 aa).

The chain crosses the membrane as a helical; Signal-anchor for type II membrane protein span at residues 25–45 (VGFFGSGVGFSLILGFSVAYA). An AB hydrolase-1 domain is found at 140 to 247 (PTVLLLPGLT…PLKAAATFSV (108 aa)). Residues Ser220, Asp346, and His375 each act as charge relay system in the active site.

The protein belongs to the AB hydrolase superfamily. AB hydrolase 4 family.

The protein resides in the membrane. The catalysed reaction is a 1,2-diacyl-sn-glycero-3-phosphocholine + H2O = a 1-acyl-sn-glycero-3-phosphocholine + a fatty acid + H(+). It carries out the reaction a 1,2-diacyl-sn-glycero-3-phosphocholine + H2O = a 2-acyl-sn-glycero-3-phosphocholine + a fatty acid + H(+). The enzyme catalyses 1-tetradecanoyl-2-(9Z,12Z-octadecadienoyl)-sn-glycero-3-phosphocholine + H2O = 2-(9Z,12Z-octadecadienoyl)-sn-glycero-3-phosphocholine + tetradecanoate + H(+). It catalyses the reaction 1-tetradecanoyl-2-(9Z,12Z-octadecadienoyl)-sn-glycero-3-phosphocholine + H2O = 1-tetradecanoyl-sn-glycero-3-phosphocholine + (9Z,12Z)-octadecadienoate + H(+). The catalysed reaction is 1-tetradecanoyl-2-(5Z,8Z,11Z,14Z-eicosatetraenoyl)-sn-glycero-3-phosphocholine + H2O = 2-(5Z,8Z,11Z,14Z)-eicosatetraenoyl-sn-glycero-3-phosphocholine + tetradecanoate + H(+). It carries out the reaction 1-tetradecanoyl-2-(4Z,7Z,10Z,13Z,16Z,19Z-docosahexaenoyl)-sn-glycero-3-phosphocholine + H2O = 2-(4Z,7Z,10Z,13Z,16Z,19Z-docosahexaenoyl)-sn-glycero-3-phosphocholine + tetradecanoate + H(+). The enzyme catalyses 1,2-ditetradecanoyl-sn-glycero-3-phosphocholine + H2O = 2-tetradecanoyl-sn-glycero-3-phosphocholine + tetradecanoate + H(+). It catalyses the reaction 1-octadecanoyl-2-acetyl-sn-glycero-3-phosphocholine + H2O = 1-octadecanoyl-sn-glycero-3-phosphocholine + acetate + H(+). The catalysed reaction is 1,2-ditetradecanoyl-sn-glycero-3-phosphocholine + H2O = 1-tetradecanoyl-sn-glycero-3-phosphocholine + tetradecanoate + H(+). It carries out the reaction 1-octadecanoyl-2-pentanoyl-sn-glycero-3-phosphocholine + H2O = pentanoate + 1-octadecanoyl-sn-glycero-3-phosphocholine + H(+). The enzyme catalyses 1-octadecanoyl-2-hexanoyl-sn-glycero-3-phosphocholine + H2O = hexanoate + 1-octadecanoyl-sn-glycero-3-phosphocholine + H(+). It catalyses the reaction 1-octadecanoyl-2-octanoyl-sn-glycero-3-phosphocholine + H2O = 1-octadecanoyl-sn-glycero-3-phosphocholine + octanoate + H(+). The catalysed reaction is 1-octadecanoyl-2-nonanoyl-sn-glycero-3-phosphocholine + H2O = nonanoate + 1-octadecanoyl-sn-glycero-3-phosphocholine + H(+). It carries out the reaction 1-O-hexadecyl-2-nonadioyl-sn-glycero-3-phosphocholine + H2O = nonanedioate + 1-O-hexadecyl-sn-glycero-3-phosphocholine + H(+). The enzyme catalyses 1-hexadecanoyl-2-nonadioyl-sn-glycero-3-phosphocholine + H2O = nonanedioate + 1-hexadecanoyl-sn-glycero-3-phosphocholine + H(+). It catalyses the reaction 1-hexadecanoyl-2-(9-oxononanoyl)-sn-glycero-3-phosphocholine + H2O = 9-oxononanoate + 1-hexadecanoyl-sn-glycero-3-phosphocholine + H(+). The catalysed reaction is 1-hexadecanoyl-2-(5-oxopentanoyl)-sn-glycero-3-phosphocholine + H2O = 5-oxopentanoate + 1-hexadecanoyl-sn-glycero-3-phosphocholine + H(+). It carries out the reaction 1-hexadecanoyl-2-glutaroyl-sn-glycero-3-phosphocholine + H2O = glutarate + 1-hexadecanoyl-sn-glycero-3-phosphocholine + H(+). The enzyme catalyses 1-O-hexadecyl-2-acetyl-sn-glycero-3-phosphocholine + H2O = 1-O-hexadecyl-sn-glycero-3-phosphocholine + acetate + H(+). In terms of biological role, phospholipase that may play a role in phospholipids remodeling. May selectively cleave myristate (C14)-containing phosphatidylcholines through its predominant phospholipase 1 activity, cleaving preferentially acyl groups in sn1 position. In parallel, may have a minor phospholipase 2 activity acting on acyl groups in position sn2. In addition to (C14)-containing phosphatidylcholines, may also act on other medium-chain-containing and oxidatively truncated phospholipids. The protein is Phospholipase ABHD3 of Bos taurus (Bovine).